Reading from the N-terminus, the 394-residue chain is 8-amino-7-oxononanoate synthase (394 aa).

Arg-18 is a binding site for substrate. A pyridoxal 5'-phosphate-binding site is contributed by 105–106 (GY). His-130 serves as a coordination point for substrate. Ser-175, His-203, and Thr-232 together coordinate pyridoxal 5'-phosphate. The residue at position 235 (Lys-235) is an N6-(pyridoxal phosphate)lysine. Thr-349 contacts substrate.

This sequence belongs to the class-II pyridoxal-phosphate-dependent aminotransferase family. BioF subfamily. In terms of assembly, homodimer. Pyridoxal 5'-phosphate is required as a cofactor.

It catalyses the reaction 6-carboxyhexanoyl-[ACP] + L-alanine + H(+) = (8S)-8-amino-7-oxononanoate + holo-[ACP] + CO2. The protein operates within cofactor biosynthesis; biotin biosynthesis. In terms of biological role, catalyzes the decarboxylative condensation of pimeloyl-[acyl-carrier protein] and L-alanine to produce 8-amino-7-oxononanoate (AON), [acyl-carrier protein], and carbon dioxide. This chain is 8-amino-7-oxononanoate synthase, found in Marinobacter nauticus (strain ATCC 700491 / DSM 11845 / VT8) (Marinobacter aquaeolei).